A 507-amino-acid chain; its full sequence is Bifunctional purine biosynthesis protein PurH (507 aa).

Residues Met-1–Val-144 enclose the MGS-like domain.

The protein belongs to the PurH family.

It carries out the reaction (6R)-10-formyltetrahydrofolate + 5-amino-1-(5-phospho-beta-D-ribosyl)imidazole-4-carboxamide = 5-formamido-1-(5-phospho-D-ribosyl)imidazole-4-carboxamide + (6S)-5,6,7,8-tetrahydrofolate. The enzyme catalyses IMP + H2O = 5-formamido-1-(5-phospho-D-ribosyl)imidazole-4-carboxamide. It participates in purine metabolism; IMP biosynthesis via de novo pathway; 5-formamido-1-(5-phospho-D-ribosyl)imidazole-4-carboxamide from 5-amino-1-(5-phospho-D-ribosyl)imidazole-4-carboxamide (10-formyl THF route): step 1/1. The protein operates within purine metabolism; IMP biosynthesis via de novo pathway; IMP from 5-formamido-1-(5-phospho-D-ribosyl)imidazole-4-carboxamide: step 1/1. The protein is Bifunctional purine biosynthesis protein PurH of Lacticaseibacillus casei (strain BL23) (Lactobacillus casei).